Consider the following 263-residue polypeptide: Rhomboid-like protease 3 (263 aa).

Helical transmembrane passes span 37–57 (KSIVWITVAQIIMYIISCVLS), 86–106 (VVTPLFLHATILHLVLNLVFI), 121–141 (KFLVTYFLSAIVGNLLSMLMQ), 142–162 (PWALSVGASTAGFGIIGGMAA), 189–209 (LIYFLSFGRTVDTFGHLGGFL), and 231–251 (VLFYGCSALCATILVVSPPLL). Serine 150 acts as the Nucleophile in catalysis. Histidine 204 is an active-site residue.

Belongs to the peptidase S54 family.

It localises to the membrane. The catalysed reaction is Cleaves type-1 transmembrane domains using a catalytic dyad composed of serine and histidine that are contributed by different transmembrane domains.. Serine protease involved in intramembrane proteolysis and the subsequent release of polypeptides from their membrane anchors. This Toxoplasma gondii protein is Rhomboid-like protease 3 (ROM3).